Reading from the N-terminus, the 299-residue chain is Hairy/enhancer-of-split related with YRPW motif protein 1 (299 aa).

The disordered stretch occupies residues 1 to 53 (MKRAHPDYSSSDSELDETIEVEKESADENGNLSSALCSMSPTTSSQVLARKRR). Positions 28–47 (ENGNLSSALCSMSPTTSSQV) are enriched in polar residues. The transcriptional repression and interaction with NCOR1 and SIN3A stretch occupies residues 48–117 (LARKRRRGII…GGKGYFDAHA (70 aa)). Residues 49–104 (ARKRRRGIIEKRRRDRINNSLSELRRLVPSAFEKQGSAKLEKAEILQMTVDHLKML) enclose the bHLH domain. Positions 122–158 (YRSLGFRECLAEVARYLSIIEGLDASDPLLVRLVSHL) constitute an Orange domain. The segment at 194–234 (LLLPQNGHGNAGTAASPTEPHHQGRLASAHPEAPALRAPPS) is disordered. A YRPW motif motif is present at residues 289 to 292 (YRPW).

Belongs to the HEY family. May self-associate. Interacts with HES1, NCOR1 and SIN3A. Interacts with GATA4, GATA6 and HDAC1 and HEYL. Interacts with CCDC89/BOIP. Expressed in somitic mesoderm, brain, central nervous system, kidney, heart, nasal epithelium, limbs, lung, muscle, ovary and testis.

The protein localises to the nucleus. Its function is as follows. Transcriptional repressor which binds preferentially to the canonical E box sequence 5'-CACGTG-3'. Downstream effector of Notch signaling required for cardiovascular development. Specifically required for the Notch-induced endocardial epithelial to mesenchymal transition, which is itself criticial for cardiac valve and septum development. May be required in conjunction with HEY2 to specify arterial cell fate or identity. Promotes maintenance of neuronal precursor cells and glial versus neuronal fate specification. Represses transcription by the cardiac transcriptional activators GATA4 and GATA6 and by the neuronal bHLH factors ASCL1/MASH1 and NEUROD4/MATH3. In Mus musculus (Mouse), this protein is Hairy/enhancer-of-split related with YRPW motif protein 1 (Hey1).